Consider the following 230-residue polypeptide: Sugar fermentation stimulation protein homolog (230 aa).

Belongs to the SfsA family.

The chain is Sugar fermentation stimulation protein homolog from Ruegeria pomeroyi (strain ATCC 700808 / DSM 15171 / DSS-3) (Silicibacter pomeroyi).